The primary structure comprises 500 residues: NAD(P)H-quinone oxidoreductase chain 4, chloroplastic (500 aa).

A run of 14 helical transmembrane segments spans residues 4–24, 37–57, 87–107, 113–130, 134–154, 167–187, 208–228, 242–262, 272–292, 305–325, 330–350, 386–406, 416–436, and 462–482; these read FPWL…IFFL, IGIC…FFQL, IGPI…AWPV, LFHF…GLFS, LLLF…LLSM, FILY…GMGL, ALEI…LPII, HYST…YGLI, AHSI…IYAA, IAYS…SITD, GAVL…FLAG, LALP…GIIT, VLIT…SLSM, and LFIS…PDFV.

It belongs to the complex I subunit 4 family.

Its subcellular location is the plastid. The protein resides in the chloroplast thylakoid membrane. The enzyme catalyses a plastoquinone + NADH + (n+1) H(+)(in) = a plastoquinol + NAD(+) + n H(+)(out). It catalyses the reaction a plastoquinone + NADPH + (n+1) H(+)(in) = a plastoquinol + NADP(+) + n H(+)(out). This chain is NAD(P)H-quinone oxidoreductase chain 4, chloroplastic, found in Ceratophyllum demersum (Rigid hornwort).